A 412-amino-acid chain; its full sequence is MIVVNKEDCIRCGACQGTCPTAAIEVTPEDVIYCDICGGEPKCVDACPTGALKIEDLVVDEAGNTQGRIVFNPDKCNECGDCVEVCPPQILKLDEGKVKKIPLQGFCVMCQKCVDICPVGVIGVEGIKEPAKVELEIEGPIFIADCVGCGMCVPECPVDAITLEKVGGVIEIDEDTCIKCGVCAQTCPWNAVYISGKKPEKRAKEIRKFELDEEACIGCNTCVEACPGDFIVPKSSNLTVELPAICTACGLCEQLCPVDAIDLDVELGPAKPASEEGLVWDEGKCDFIGACANICPNDAIRVVTREGMKLPDNEKVDEEPSFAMCTRCGACTMACPKGALSLVDMDKVIDGEVVKRKRVQYNPALCDQCGDCIEACPYDMLKLTDEKVPLKGFCILCDQCIPACPKGALSLK.

4Fe-4S ferredoxin-type domains follow at residues 1–29, 30–57, 67–96, 97–127, 138–166, 168–197, 207–236, 238–266, 276–305, 314–345, 357–386, and 385–412; these read MIVVNKEDCIRCGACQGTCPTAAIEVTPE, DVIYCDICGGEPKCVDACPTGALKIEDL, GRIVFNPDKCNECGDCVEVCPPQILKLDEG, KVKKIPLQGFCVMCQKCVDICPVGVIGVEGI, EGPIFIADCVGCGMCVPECPVDAITLEKV, GVIEIDEDTCIKCGVCAQTCPWNAVYISGK, RKFELDEEACIGCNTCVEACPGDFIVPKSS, LTVELPAICTACGLCEQLCPVDAIDLDVE, EGLVWDEGKCDFIGACANICPNDAIRVVTR, EKVDEEPSFAMCTRCGACTMACPKGALSLVDM, KRVQYNPALCDQCGDCIEACPYDMLKLTDE, and DEKVPLKGFCILCDQCIPACPKGALSLK. Cysteine 9, cysteine 12, cysteine 15, and cysteine 19 together coordinate [4Fe-4S] cluster. Positions 76, 79, 82, 86, 107, 110, 113, 117, 146, 149, 152, 156, 177, 180, 183, 187, 216, 219, 222, 226, 246, 249, 252, and 256 each coordinate [4Fe-4S] cluster. [4Fe-4S] cluster is bound by residues cysteine 325, cysteine 328, cysteine 331, cysteine 335, cysteine 366, cysteine 369, cysteine 372, cysteine 376, cysteine 394, cysteine 397, cysteine 400, and cysteine 404.

[4Fe-4S] cluster is required as a cofactor.

This chain is Polyferredoxin protein MvhB (mvhB), found in Methanothermobacter marburgensis (strain ATCC BAA-927 / DSM 2133 / JCM 14651 / NBRC 100331 / OCM 82 / Marburg) (Methanobacterium thermoautotrophicum).